Here is a 560-residue protein sequence, read N- to C-terminus: Solute carrier family 49 member A3 (560 aa).

Transmembrane regions (helical) follow at residues 30 to 50, 70 to 90, 100 to 120, 125 to 145, 166 to 186, 192 to 212, 250 to 270, 282 to 302, 318 to 338, 341 to 361, 379 to 399, and 422 to 442; these read WVFL…WLSF, WLSL…IWIL, ILGA…CMVV, PFAF…LVIF, LATM…PVLV, IPLM…LSTI, VILA…SALL, GFSG…ALAL, IGLC…QLQG, LALA…GPVA, GMIF…MTAL, and VSLL…AVFF. A disordered region spans residues 451 to 540; it reads AESGEPPSTR…PGRLAGRVQA (90 aa). A compositionally biased stretch (gly residues) spans 466-481; sequence ADSGPGVDRGGAGRAG.

This sequence belongs to the major facilitator superfamily.

The protein localises to the membrane. The protein is Solute carrier family 49 member A3 of Homo sapiens (Human).